Here is a 339-residue protein sequence, read N- to C-terminus: HPr kinase/phosphorylase (339 aa).

Residues His153 and Lys174 contribute to the active site. 168–175 serves as a coordination point for ATP; that stretch reads GKSGLGKS. A Mg(2+)-binding site is contributed by Ser175. Asp192 serves as the catalytic Proton acceptor; for phosphorylation activity. Proton donor; for dephosphorylation activity. Residues 216–225 form an important for the catalytic mechanism of both phosphorylation and dephosphorylation region; that stretch reads MEIRGLGVVD. Residue Glu217 participates in Mg(2+) binding. Arg258 is a catalytic residue. The segment at 279–284 is important for the catalytic mechanism of dephosphorylation; sequence PINPGK.

Belongs to the HPrK/P family. As to quaternary structure, homohexamer. It depends on Mg(2+) as a cofactor.

It carries out the reaction [HPr protein]-L-serine + ATP = [HPr protein]-O-phospho-L-serine + ADP + H(+). The catalysed reaction is [HPr protein]-O-phospho-L-serine + phosphate + H(+) = [HPr protein]-L-serine + diphosphate. Functionally, catalyzes the ATP- as well as the pyrophosphate-dependent phosphorylation of a specific serine residue in HPr, a phosphocarrier protein of the phosphoenolpyruvate-dependent sugar phosphotransferase system (PTS). HprK/P also catalyzes the pyrophosphate-producing, inorganic phosphate-dependent dephosphorylation (phosphorolysis) of seryl-phosphorylated HPr (P-Ser-HPr). This chain is HPr kinase/phosphorylase, found in Chlorobium phaeobacteroides (strain BS1).